Reading from the N-terminus, the 453-residue chain is Tetrahydroanabasine acetyltransferase (453 aa).

Active-site proton acceptor residues include His163 and Asp388.

The protein belongs to the plant acyltransferase family. In terms of assembly, monomer.

It carries out the reaction tetrahydroanabasine + acetyl-CoA = ammodendrine + CoA. The protein operates within alkaloid biosynthesis. Functionally, tetrahydroanabasine acetyltransferase involved in the accumulation of quinolizidine type antinutritional alkaloids (QAs). QAs impart a bitter taste to plants, acting as repellents and toxicants for herbivores and predators, and possess a variety of pharmacological effects, including sedative, anticonvulsant, anti-inflammatory, antiviral, antitumor, antipyretic, anti-hepatitis B, antifibrotic, antiallergic, antidiarrheal, analgesic and antimicrobial activities. Mediates the conversion of tetrahydroanabasine into ammodendrine. The chain is Tetrahydroanabasine acetyltransferase from Lupinus angustifolius (Narrow-leaved blue lupine).